The sequence spans 80 residues: Defensin-like protein 2 (80 aa).

The N-terminal stretch at 1 to 29 is a signal peptide; sequence MAKFASIIVLLFVALVVFAAFEEPTMVEA. Q30 bears the Pyrrolidone carboxylic acid mark. Intrachain disulfides connect C33–C80, C44–C65, C50–C74, and C54–C76.

This sequence belongs to the DEFL family.

The protein resides in the secreted. Functionally, possesses antifungal activity sensitive to inorganic cations. Induces potential changes in fungal membranes and increased K(+) efflux and Ca(2+) uptake. This is Defensin-like protein 2 (AFP2) from Raphanus sativus (Radish).